Here is a 160-residue protein sequence, read N- to C-terminus: Ribosomal RNA large subunit methyltransferase H (160 aa).

S-adenosyl-L-methionine is bound by residues Leu76 and Gly108.

It belongs to the RNA methyltransferase RlmH family. Homodimer.

The protein localises to the cytoplasm. The enzyme catalyses pseudouridine(1915) in 23S rRNA + S-adenosyl-L-methionine = N(3)-methylpseudouridine(1915) in 23S rRNA + S-adenosyl-L-homocysteine + H(+). In terms of biological role, specifically methylates the pseudouridine at position 1915 (m3Psi1915) in 23S rRNA. The polypeptide is Ribosomal RNA large subunit methyltransferase H (Bradyrhizobium sp. (strain BTAi1 / ATCC BAA-1182)).